The chain runs to 281 residues: Putative phosphoenolpyruvate synthase regulatory protein (281 aa).

161-168 contributes to the ADP binding site; it reads GVSRSGKT.

This sequence belongs to the pyruvate, phosphate/water dikinase regulatory protein family. PSRP subfamily.

The catalysed reaction is [pyruvate, water dikinase] + ADP = [pyruvate, water dikinase]-phosphate + AMP + H(+). It catalyses the reaction [pyruvate, water dikinase]-phosphate + phosphate + H(+) = [pyruvate, water dikinase] + diphosphate. Its function is as follows. Bifunctional serine/threonine kinase and phosphorylase involved in the regulation of the phosphoenolpyruvate synthase (PEPS) by catalyzing its phosphorylation/dephosphorylation. This Herminiimonas arsenicoxydans protein is Putative phosphoenolpyruvate synthase regulatory protein.